A 500-amino-acid polypeptide reads, in one-letter code: Protein adenylyltransferase Fic (500 aa).

The helical transmembrane segment at 39 to 59 (LSFLIFFVIGSLFSGLMFALL) threads the bilayer. 2 TPR repeats span residues 122 to 155 (ALSS…SPRH) and 156 to 190 (PEIL…NPSH). The Inhibitory (S/T)XXXE(G/N) motif signature appears at 247 to 252 (SVGIEG). ATP-binding positions include Glu251 and 333–336 (VGGH). Positions 302–437 (ITLKDLLEIH…IRPFVRFIAD (136 aa)) constitute a Fido domain. His380 is a catalytic residue. ATP contacts are provided by residues 384–391 (DGNGRTSR), 416–417 (YY), and Asn424. Positions 477 to 500 (GREGGSTVHEGSGTGDSIRIGTMW) are disordered.

The protein belongs to the fic family. Homodimer.

It localises to the membrane. It carries out the reaction L-tyrosyl-[protein] + ATP = O-(5'-adenylyl)-L-tyrosyl-[protein] + diphosphate. The enzyme catalyses L-threonyl-[protein] + ATP = 3-O-(5'-adenylyl)-L-threonyl-[protein] + diphosphate. The catalysed reaction is 3-O-(5'-adenylyl)-L-threonyl-[protein] + H2O = L-threonyl-[protein] + AMP + H(+). With respect to regulation, the side chain of Glu-251 determines which of the two opposing activities (AMPylase or de-AMPylase) will take place. In response to endoplasmic reticulum stress, mediates de-AMPylase activity. Adenylyltransferase activity is inhibited by the inhibitory helix present at the N-terminus: Glu-251 binds ATP and competes with ATP-binding at Arg-391, thereby preventing adenylyltransferase activity. In unstressed cells, disengagement of Glu-251 promotes adenylyltransferase activity. Activation dissociates ATP-binding from Glu-251, allowing ordered binding of the entire ATP moiety with the alpha-phosphate in an orientation that is productive for accepting an incoming target hydroxyl side chain. In terms of biological role, protein that can both mediate the addition of adenosine 5'-monophosphate (AMP) to specific residues of target proteins (AMPylation), and the removal of the same modification from target proteins (de-AMPylation), depending on the context. The side chain of Glu-251 determines which of the two opposing activities (AMPylase or de-AMPylase) will take place. Acts as a key regulator of the unfolded protein response (UPR) by mediating AMPylation or de-AMPylation of Hsc70-3/BiP. In unstressed cells, acts as an adenylyltransferase by mediating AMPylation of Hsc70-3/BiP at 'Thr-518', thereby inactivating it. In response to endoplasmic reticulum stress, acts as a phosphodiesterase by mediating removal of ATP (de-AMPylation) from Hsc70-3/BiP at 'Thr-518', leading to restore HSPA5/BiP activity. In Culex quinquefasciatus (Southern house mosquito), this protein is Protein adenylyltransferase Fic.